We begin with the raw amino-acid sequence, 149 residues long: Urease accessory protein UreE (149 aa).

It belongs to the UreE family.

The protein localises to the cytoplasm. In terms of biological role, involved in urease metallocenter assembly. Binds nickel. Probably functions as a nickel donor during metallocenter assembly. This is Urease accessory protein UreE from Ureaplasma urealyticum serovar 10 (strain ATCC 33699 / Western).